Here is a 98-residue protein sequence, read N- to C-terminus: NADH-ubiquinone oxidoreductase chain 4L (98 aa).

A run of 3 helical transmembrane segments spans residues Met1–Met21, Ser29–Leu49, and Met59–Val79.

Belongs to the complex I subunit 4L family. As to quaternary structure, core subunit of respiratory chain NADH dehydrogenase (Complex I) which is composed of 45 different subunits.

It is found in the mitochondrion inner membrane. The catalysed reaction is a ubiquinone + NADH + 5 H(+)(in) = a ubiquinol + NAD(+) + 4 H(+)(out). Its function is as follows. Core subunit of the mitochondrial membrane respiratory chain NADH dehydrogenase (Complex I) which catalyzes electron transfer from NADH through the respiratory chain, using ubiquinone as an electron acceptor. Part of the enzyme membrane arm which is embedded in the lipid bilayer and involved in proton translocation. This Cervus elaphus (Red deer) protein is NADH-ubiquinone oxidoreductase chain 4L (MT-ND4L).